The primary structure comprises 486 residues: Malonate-semialdehyde dehydrogenase (486 aa).

Positions 154, 178, 181, 182, and 231 each coordinate NAD(+). The active-site Nucleophile is the Cys286. Glu386 is a binding site for NAD(+).

This sequence belongs to the aldehyde dehydrogenase family. IolA subfamily. As to quaternary structure, homotetramer.

The catalysed reaction is 3-oxopropanoate + NAD(+) + CoA + H2O = hydrogencarbonate + acetyl-CoA + NADH + H(+). The enzyme catalyses 2-methyl-3-oxopropanoate + NAD(+) + CoA + H2O = propanoyl-CoA + hydrogencarbonate + NADH + H(+). It functions in the pathway polyol metabolism; myo-inositol degradation into acetyl-CoA; acetyl-CoA from myo-inositol: step 7/7. In terms of biological role, catalyzes the oxidation of malonate semialdehyde (MSA) and methylmalonate semialdehyde (MMSA) into acetyl-CoA and propanoyl-CoA, respectively. Is involved in a myo-inositol catabolic pathway. Bicarbonate, and not CO2, is the end-product of the enzymatic reaction. In Bacillus cereus (strain ATCC 10987 / NRS 248), this protein is Malonate-semialdehyde dehydrogenase.